Here is a 95-residue protein sequence, read N- to C-terminus: Lipolysis-activating peptide 1-beta chain (95 aa).

The signal sequence occupies residues 1 to 22 (MISVQVIFIAFISIIAFSMVCG). Residues 23–91 (GNVFPNRELG…FLNALEKQCP (69 aa)) form the LCN-type CS-alpha/beta domain. Disulfide bonds link cysteine 37/cysteine 60, cysteine 45/cysteine 70, and cysteine 49/cysteine 72.

In terms of assembly, homodimer; disulfide-linked or monomer (edited version) or heterodimer of an alpha chain (AC P84810) and this beta chain (non-edited version). Expressed by the venom gland.

It localises to the secreted. Its function is as follows. The homodimer inhibits HMG-CoA reductase (HMGCR) (32% of inhibition produced by 0.6 uM), a glycoprotein involved in the control of cholesterol biosynthesis. The inhibitory effects of bumarsin are seen at much lower concentrations (0.6 uM) than that for statins such as atorvastatin (5 mM) and simvastatin (10 uM). In addition to inhibition of HMG-CoA reductase, this protein lowers cholesterol levels by inducing steroid hormone synthesis via StAR, and by increasing reverse cholesterol transport mediated by the induction of ABCA1 and APOA1. The heterodimer non-edited LVP1 induces lipolysis in rat adipocytes. Induction of lipolysis by LVP1 appears to be mediated through the beta-2 adrenergic receptor pathway (ADRB2). Intracerebroventricular injection is not toxic to mice. In terms of biological role, the monomer edited version, similar to alpha-toxins, may modulate voltage-gated sodium channels (Nav) and may block voltage-gated potassium channels (Kv). The chain is Lipolysis-activating peptide 1-beta chain from Buthus occitanus tunetanus (Common European scorpion).